The sequence spans 284 residues: GPN-loop GTPase 3 (284 aa).

Residue 13 to 18 participates in GTP binding; sequence GSGKST. The Gly-Pro-Asn (GPN)-loop; involved in dimer interface signature appears at 72 to 74; the sequence is GPN. 174–177 is a GTP binding site; that stretch reads TKMD. A disordered region spans residues 262–284; that stretch reads EPREHEEESSSMFDEYFQERQNE.

This sequence belongs to the GPN-loop GTPase family. Heterodimer with GPN1. Binds to RNA polymerase II (RNAPII). Interacts directly with subunits RPB4 and RPB7 and the CTD of RPB1.

Functionally, small GTPase required for proper localization of RNA polymerase II (RNAPII). May act at an RNAP assembly step prior to nuclear import. The chain is GPN-loop GTPase 3 from Mus musculus (Mouse).